Reading from the N-terminus, the 208-residue chain is Redox-sensing transcriptional repressor Rex (208 aa).

A DNA-binding region (H-T-H motif) is located at residues 18-57; the sequence is IYYRYFKLLETDGIERIKSEQLAKLVAIPSATIRRDFSYI. An NAD(+)-binding site is contributed by 92-97; sequence GVGNLG.

Belongs to the transcriptional regulatory Rex family. As to quaternary structure, homodimer.

The protein resides in the cytoplasm. Modulates transcription in response to changes in cellular NADH/NAD(+) redox state. The chain is Redox-sensing transcriptional repressor Rex from Latilactobacillus sakei subsp. sakei (strain 23K) (Lactobacillus sakei subsp. sakei).